The following is a 294-amino-acid chain: MTASTLPRSDVEFTTLDGLTLRGWLFPASQRGPALIMSPGFNMPKDAILPDIAKWFQEHGITCLLYDPRGIGASDGEPRNDIDARQQAEHLHDAVTWFKENPLVNEKQIALWGLCFGGNVTLAAAAFDKRVAAAIAVAPLIDSTGNPERRQPILELAMHDRASRLDGEEPMYLPYVNEDGSIPNGLQLAAEMMPALERLGIPVENRISVQTYYKSLSWNILNVVQYISPTPAMMVTPELDVSCPTEDQLNCFEHMKEPKELDILKGKGHLDWVFGDVESILNRQLDFLKRHMAF.

Catalysis depends on residues Cys-115, Asp-240, and His-269.

It belongs to the polyketide transferase af380 family. In terms of assembly, homodimer.

It participates in secondary metabolite biosynthesis. Its function is as follows. Polyketide transferase; part of the gene cluster that mediates the biosynthesis of gregatin A, a fungal polyketide featuring an alkylated furanone core. The PKS grgA synthesizes C11 and C4 polyketide chains in the presence and absence of the trans-enoyl reductase grgB, respectively. The polyketide transferase grgF is then responsible for the fusion of the two carbon chains to produce the furanone skeleton of gregatin A. GrgF first undergoes a conformational change to an open form, and the active site Cys-115 is acylated by the C11 chain. After the elimination of the phosphopantetheinyl chain, the second polyketide chain of four carbons long is delivered adjacent to the enzyme-bound C11 chain. The catalytic histidine, His-269, deprotonates a proton from C-2 of the long chain, and the resultant carbanion attacks the C-1 carbonyl of the crotonyl group to perform Claisen condensation, by which the phosphopantetheinyl chain is released. Eventually, hydrolysis of the thioester linkage probably by a His-269-activated water molecule completes the reaction to afford the grgF final product. Next, the cytochrome P450 monooxygenase grgG accepts the unstable grgF final product as substrate and performs the oxidative cyclization to furnish the gregatin scaffold and leads to the formation of desmethylgregatin A. Finally, the O-methyltransferase grgD methylates the carboxyl group of desmethylgregatin A to provide gregatin A. The sequence is that of Polyketide transferase grgF from Penicillium sp.